Consider the following 278-residue polypeptide: Bifunctional protein FolD (278 aa).

NADP(+) contacts are provided by residues 162–164 (GAG) and Ile228.

It belongs to the tetrahydrofolate dehydrogenase/cyclohydrolase family. As to quaternary structure, homodimer.

The catalysed reaction is (6R)-5,10-methylene-5,6,7,8-tetrahydrofolate + NADP(+) = (6R)-5,10-methenyltetrahydrofolate + NADPH. It catalyses the reaction (6R)-5,10-methenyltetrahydrofolate + H2O = (6R)-10-formyltetrahydrofolate + H(+). Its pathway is one-carbon metabolism; tetrahydrofolate interconversion. Its function is as follows. Catalyzes the oxidation of 5,10-methylenetetrahydrofolate to 5,10-methenyltetrahydrofolate and then the hydrolysis of 5,10-methenyltetrahydrofolate to 10-formyltetrahydrofolate. The protein is Bifunctional protein FolD of Hydrogenobaculum sp. (strain Y04AAS1).